A 548-amino-acid polypeptide reads, in one-letter code: Polynucleotide 5'-hydroxyl-kinase nol-9 (548 aa).

186–193 provides a ligand contact to ATP; that stretch reads GHKGAGKS.

It belongs to the Clp1 family. NOL9/GRC3 subfamily.

It is found in the nucleus. It localises to the nucleolus. In terms of biological role, polynucleotide 5'-kinase involved in rRNA processing. In Caenorhabditis briggsae, this protein is Polynucleotide 5'-hydroxyl-kinase nol-9 (nol-9).